Consider the following 291-residue polypeptide: MDRKRYELNKELAQMLKGGVIMDVTTPEQAKIAEAAGACAVMALERIPADIRAVGGVSRMSDPKMIKGIMEAVSIPVMAKCRIGHFVEAQILEAVEIDYIDESEVLSPADDVYHIDKTRFKVPFVCGAKDLGEALRRINEGAAMIRTKGEPGTGDIVQAVRHMRMINRQISRLAGMREDELFQEAKELQVPYDLVLYVHEHKRLPVVNFAAGGVATPGDAALMMQLGAEGVFVGSGIFKSGDPEKRAQAIVKAVTNYQDPKVLAELSEDLGEAMVGINEQEIELLMAERGK.

Asp23 lines the D-ribose 5-phosphate pocket. Catalysis depends on Lys80, which acts as the Schiff-base intermediate with D-ribose 5-phosphate. Gly152 serves as a coordination point for D-ribose 5-phosphate. Arg164 provides a ligand contact to D-glyceraldehyde 3-phosphate. D-ribose 5-phosphate-binding positions include Gly213 and 234–235 (GS).

The protein belongs to the PdxS/SNZ family. In terms of assembly, in the presence of PdxT, forms a dodecamer of heterodimers.

The catalysed reaction is aldehydo-D-ribose 5-phosphate + D-glyceraldehyde 3-phosphate + L-glutamine = pyridoxal 5'-phosphate + L-glutamate + phosphate + 3 H2O + H(+). The protein operates within cofactor biosynthesis; pyridoxal 5'-phosphate biosynthesis. Its function is as follows. Catalyzes the formation of pyridoxal 5'-phosphate from ribose 5-phosphate (RBP), glyceraldehyde 3-phosphate (G3P) and ammonia. The ammonia is provided by the PdxT subunit. Can also use ribulose 5-phosphate and dihydroxyacetone phosphate as substrates, resulting from enzyme-catalyzed isomerization of RBP and G3P, respectively. The protein is Pyridoxal 5'-phosphate synthase subunit PdxS of Desulfitobacterium hafniense (strain DSM 10664 / DCB-2).